The sequence spans 266 residues: uncharacterized protein (266 aa).

This is an uncharacterized protein from Ostreid herpesvirus 1 (isolate France) (OsHV-1).